Here is a 185-residue protein sequence, read N- to C-terminus: Large ribosomal subunit protein uL5 (185 aa).

Belongs to the universal ribosomal protein uL5 family. Part of the 50S ribosomal subunit; part of the 5S rRNA/L5/L18/L25 subcomplex. Contacts the 5S rRNA and the P site tRNA. Forms a bridge to the 30S subunit in the 70S ribosome.

This is one of the proteins that bind and probably mediate the attachment of the 5S RNA into the large ribosomal subunit, where it forms part of the central protuberance. In the 70S ribosome it contacts protein S13 of the 30S subunit (bridge B1b), connecting the 2 subunits; this bridge is implicated in subunit movement. Contacts the P site tRNA; the 5S rRNA and some of its associated proteins might help stabilize positioning of ribosome-bound tRNAs. The sequence is that of Large ribosomal subunit protein uL5 from Parvibaculum lavamentivorans (strain DS-1 / DSM 13023 / NCIMB 13966).